Consider the following 41-residue polypeptide: Peroxidase 3 (41 aa).

It belongs to the peroxidase family. Classical plant (class III) peroxidase subfamily. Heme b serves as cofactor. It depends on Ca(2+) as a cofactor.

Its subcellular location is the secreted. It catalyses the reaction 2 a phenolic donor + H2O2 = 2 a phenolic radical donor + 2 H2O. Its function is as follows. Removal of H(2)O(2), oxidation of toxic reductants, biosynthesis and degradation of lignin, suberization, auxin catabolism, response to environmental stresses such as wounding, pathogen attack and oxidative stress. These functions might be dependent on each isozyme/isoform in each plant tissue. The polypeptide is Peroxidase 3 (Vitis vinifera (Grape)).